The chain runs to 557 residues: Enhancer of polycomb-like protein 1 (557 aa).

Disordered regions lie at residues 323-349 (VKPA…RPQP) and 424-449 (QSHN…TYST). Residues 327-337 (APVPTPAPPVK) show a composition bias toward pro residues. Positions 429-441 (LSIPSSTPSTPLS) are enriched in low complexity.

This sequence belongs to the enhancer of polycomb family. As to quaternary structure, component of the NuA4 histone acetyltransferase complex.

It is found in the nucleus. Functionally, component of the NuA4 histone acetyltransferase complex which is involved in transcriptional activation of selected genes principally by acetylation of nucleosomal histone H4 and H2A. The NuA4 complex is also involved in DNA repair. Involved in gene silencing by neighboring heterochromatin, blockage of the silencing spreading along the chromosome, and required for cell cycle progression through G2/M. The sequence is that of Enhancer of polycomb-like protein 1 (epl1) from Schizosaccharomyces pombe (strain 972 / ATCC 24843) (Fission yeast).